The sequence spans 709 residues: Elongation factor G (709 aa).

The 277-residue stretch at 10 to 286 folds into the tr-type G domain; the sequence is NKVRNIGIMA…AVVDFLPSPL (277 aa). Residues 19–26, 83–87, and 137–140 each bind GTP; these read AHIDAGKT, DTPGH, and NKMD.

Belongs to the TRAFAC class translation factor GTPase superfamily. Classic translation factor GTPase family. EF-G/EF-2 subfamily.

It is found in the cytoplasm. Catalyzes the GTP-dependent ribosomal translocation step during translation elongation. During this step, the ribosome changes from the pre-translocational (PRE) to the post-translocational (POST) state as the newly formed A-site-bound peptidyl-tRNA and P-site-bound deacylated tRNA move to the P and E sites, respectively. Catalyzes the coordinated movement of the two tRNA molecules, the mRNA and conformational changes in the ribosome. The chain is Elongation factor G from Corynebacterium glutamicum (strain R).